A 63-amino-acid chain; its full sequence is Large ribosomal subunit protein bL28 (63 aa).

This sequence belongs to the bacterial ribosomal protein bL28 family.

The sequence is that of Large ribosomal subunit protein bL28 from Heliobacterium modesticaldum (strain ATCC 51547 / Ice1).